The primary structure comprises 504 residues: Protoporphyrinogen oxidase, mitochondrial (504 aa).

FAD is bound by residues 20–25, 43–44, lysine 51, and 65–68; these read GAGVSG, EA, and GANT. A disordered region spans residues 213-232; the sequence is SPKNEKKQGPPKTSANKKRQ. FAD-binding positions include valine 264 and 473-475; that span reads LSV.

This sequence belongs to the protoporphyrinogen/coproporphyrinogen oxidase family. Protoporphyrinogen oxidase subfamily. FAD is required as a cofactor.

It is found in the mitochondrion. It catalyses the reaction protoporphyrinogen IX + 3 O2 = protoporphyrin IX + 3 H2O2. It functions in the pathway porphyrin-containing compound metabolism; protoporphyrin-IX biosynthesis; protoporphyrin-IX from protoporphyrinogen-IX: step 1/1. Its activity is regulated as follows. Inhibited by the herbicide acifluorfen. Its function is as follows. Catalyzes the 6-electron oxidation of protoporphyrinogen-IX to form protoporphyrin-IX. In terms of biological role, provides precursor for the mitochondrial and plastidic heme synthesis and the predominant chlorophyll synthesis in plastids. This is Protoporphyrinogen oxidase, mitochondrial (PPXII) from Nicotiana tabacum (Common tobacco).